Consider the following 429-residue polypeptide: uncharacterized protein (429 aa).

A compositionally biased stretch (basic and acidic residues) spans 1–12 (MSDSKEDIRNGQ). Disordered stretches follow at residues 1-63 (MSDS…APEA), 257-306 (RSRA…SDRM), and 320-429 (YRGY…SDSE). Residues 328 to 362 (EENEEDDLGDFIAEEEEEEEQEEEQEEDEEDEEEV) are compositionally biased toward acidic residues. Residues 369-378 (KGFDADKEAS) are compositionally biased toward basic and acidic residues.

This sequence belongs to the LEO1 family.

The protein resides in the nucleus. This is an uncharacterized protein from Schizosaccharomyces pombe (strain 972 / ATCC 24843) (Fission yeast).